Reading from the N-terminus, the 31-residue chain is Cytochrome b6-f complex subunit 6 (31 aa).

Residues 4–24 form a helical membrane-spanning segment; the sequence is ITSYFGFLLAALTITSALFIG.

This sequence belongs to the PetL family. The 4 large subunits of the cytochrome b6-f complex are cytochrome b6, subunit IV (17 kDa polypeptide, PetD), cytochrome f and the Rieske protein, while the 4 small subunits are PetG, PetL, PetM and PetN. The complex functions as a dimer.

It is found in the plastid. Its subcellular location is the chloroplast thylakoid membrane. Its function is as follows. Component of the cytochrome b6-f complex, which mediates electron transfer between photosystem II (PSII) and photosystem I (PSI), cyclic electron flow around PSI, and state transitions. PetL is important for photoautotrophic growth as well as for electron transfer efficiency and stability of the cytochrome b6-f complex. This Citrus sinensis (Sweet orange) protein is Cytochrome b6-f complex subunit 6.